A 110-amino-acid polypeptide reads, in one-letter code: Phosphoribosyl-ATP pyrophosphatase (110 aa).

The protein belongs to the PRA-PH family.

It is found in the cytoplasm. The enzyme catalyses 1-(5-phospho-beta-D-ribosyl)-ATP + H2O = 1-(5-phospho-beta-D-ribosyl)-5'-AMP + diphosphate + H(+). Its pathway is amino-acid biosynthesis; L-histidine biosynthesis; L-histidine from 5-phospho-alpha-D-ribose 1-diphosphate: step 2/9. The chain is Phosphoribosyl-ATP pyrophosphatase from Hahella chejuensis (strain KCTC 2396).